Consider the following 621-residue polypeptide: Glutathione-regulated potassium-efflux system protein KefC (621 aa).

12 helical membrane passes run 4–24 (HTLI…PVAV), 26–46 (LGLG…PWGF), 54–74 (SILH…GLEL), 90–110 (GALQ…LLGM), 114–134 (VAEL…MQAM), 151–171 (VLLF…LLAV), 178–198 (LGAF…VILL), 218–238 (VFSA…EEAG), 270–290 (GLLL…GTLV), 294–314 (LRIL…LWLI), 327–347 (WFAV…GAAQ), and 359–379 (ALTL…VLLT). Positions 399-518 (QPRVIIAGFG…AGVETPERET (120 aa)) constitute an RCK N-terminal domain. The interval 591–621 (LSLTQRHGWQGTEEGKHTGDPRDEPESKPTV) is disordered. Over residues 603–621 (EEGKHTGDPRDEPESKPTV) the composition is skewed to basic and acidic residues.

This sequence belongs to the monovalent cation:proton antiporter 2 (CPA2) transporter (TC 2.A.37) family. KefC subfamily. As to quaternary structure, homodimer. Interacts with the regulatory subunit KefF.

The protein resides in the cell inner membrane. In terms of biological role, pore-forming subunit of a potassium efflux system that confers protection against electrophiles. Catalyzes K(+)/H(+) antiport. The protein is Glutathione-regulated potassium-efflux system protein KefC of Enterobacter sp. (strain 638).